The primary structure comprises 506 residues: Cysteine--tRNA ligase (506 aa).

C34 contributes to the Zn(2+) binding site. Residues 36 to 46 (PTVYDFAHIGN) carry the 'HIGH' region motif. C230, H269, and E273 together coordinate Zn(2+). The short motif at 302 to 306 (KMSKS) is the 'KMSKS' region element. K305 is an ATP binding site.

Belongs to the class-I aminoacyl-tRNA synthetase family. As to quaternary structure, monomer. Requires Zn(2+) as cofactor.

It is found in the cytoplasm. It carries out the reaction tRNA(Cys) + L-cysteine + ATP = L-cysteinyl-tRNA(Cys) + AMP + diphosphate. The chain is Cysteine--tRNA ligase from Brucella suis (strain ATCC 23445 / NCTC 10510).